A 569-amino-acid chain; its full sequence is Membrane protein insertase YidC (569 aa).

A helical transmembrane segment spans residues 6–26; the sequence is FVLFLIFATSLLFLWDAWQKE. Polar residues-rich tracts occupy residues 32-52 and 62-74; these read QGPK…TAGT and LASS…STAE. Residues 32-81 form a disordered region; sequence QGPKTAVQGTETQANTGTAGTAETPVPGDQLASSVPQRGSTAENGAPVRA. A run of 5 helical transmembrane segments spans residues 348-368, 375-395, 442-462, 479-499, and 519-539; these read VVDY…LSLF, WGVA…PLSA, GGCL…WVLL, LSAP…MFLQ, and PLAF…YSLV.

The protein belongs to the OXA1/ALB3/YidC family. Type 1 subfamily. Interacts with the Sec translocase complex via SecD. Specifically interacts with transmembrane segments of nascent integral membrane proteins during membrane integration.

Its subcellular location is the cell inner membrane. Functionally, required for the insertion and/or proper folding and/or complex formation of integral membrane proteins into the membrane. Involved in integration of membrane proteins that insert both dependently and independently of the Sec translocase complex, as well as at least some lipoproteins. Aids folding of multispanning membrane proteins. The sequence is that of Membrane protein insertase YidC from Nitrosospira multiformis (strain ATCC 25196 / NCIMB 11849 / C 71).